We begin with the raw amino-acid sequence, 310 residues long: 4-hydroxy-3-methylbut-2-enyl diphosphate reductase (310 aa).

Cys-13 contributes to the [4Fe-4S] cluster binding site. (2E)-4-hydroxy-3-methylbut-2-enyl diphosphate is bound by residues His-42 and His-75. 2 residues coordinate dimethylallyl diphosphate: His-42 and His-75. Residues His-42 and His-75 each contribute to the isopentenyl diphosphate site. Cys-97 is a [4Fe-4S] cluster binding site. A (2E)-4-hydroxy-3-methylbut-2-enyl diphosphate-binding site is contributed by His-125. His-125 serves as a coordination point for dimethylallyl diphosphate. His-125 is an isopentenyl diphosphate binding site. The active-site Proton donor is Glu-127. Thr-165 provides a ligand contact to (2E)-4-hydroxy-3-methylbut-2-enyl diphosphate. Cys-195 is a [4Fe-4S] cluster binding site. 4 residues coordinate (2E)-4-hydroxy-3-methylbut-2-enyl diphosphate: Ser-223, Ser-224, Asn-225, and Ser-267. Ser-223, Ser-224, Asn-225, and Ser-267 together coordinate dimethylallyl diphosphate. The isopentenyl diphosphate site is built by Ser-223, Ser-224, Asn-225, and Ser-267.

Belongs to the IspH family. The cofactor is [4Fe-4S] cluster.

The enzyme catalyses isopentenyl diphosphate + 2 oxidized [2Fe-2S]-[ferredoxin] + H2O = (2E)-4-hydroxy-3-methylbut-2-enyl diphosphate + 2 reduced [2Fe-2S]-[ferredoxin] + 2 H(+). The catalysed reaction is dimethylallyl diphosphate + 2 oxidized [2Fe-2S]-[ferredoxin] + H2O = (2E)-4-hydroxy-3-methylbut-2-enyl diphosphate + 2 reduced [2Fe-2S]-[ferredoxin] + 2 H(+). Its pathway is isoprenoid biosynthesis; dimethylallyl diphosphate biosynthesis; dimethylallyl diphosphate from (2E)-4-hydroxy-3-methylbutenyl diphosphate: step 1/1. It participates in isoprenoid biosynthesis; isopentenyl diphosphate biosynthesis via DXP pathway; isopentenyl diphosphate from 1-deoxy-D-xylulose 5-phosphate: step 6/6. Its function is as follows. Catalyzes the conversion of 1-hydroxy-2-methyl-2-(E)-butenyl 4-diphosphate (HMBPP) into a mixture of isopentenyl diphosphate (IPP) and dimethylallyl diphosphate (DMAPP). Acts in the terminal step of the DOXP/MEP pathway for isoprenoid precursor biosynthesis. This chain is 4-hydroxy-3-methylbut-2-enyl diphosphate reductase, found in Chlamydia pneumoniae (Chlamydophila pneumoniae).